We begin with the raw amino-acid sequence, 294 residues long: Cytidine deaminase (294 aa).

2 consecutive CMP/dCMP-type deaminase domains span residues 48-168 and 186-294; these read DEDA…FGPK and LTGD…VLLG. 89-91 contacts substrate; the sequence is NME. His102 serves as a coordination point for Zn(2+). Residue Glu104 is the Proton donor of the active site. Residues Cys129 and Cys132 each contribute to the Zn(2+) site.

The protein belongs to the cytidine and deoxycytidylate deaminase family. In terms of assembly, homodimer. Requires Zn(2+) as cofactor.

The enzyme catalyses cytidine + H2O + H(+) = uridine + NH4(+). The catalysed reaction is 2'-deoxycytidine + H2O + H(+) = 2'-deoxyuridine + NH4(+). Its function is as follows. This enzyme scavenges exogenous and endogenous cytidine and 2'-deoxycytidine for UMP synthesis. The chain is Cytidine deaminase from Escherichia fergusonii (strain ATCC 35469 / DSM 13698 / CCUG 18766 / IAM 14443 / JCM 21226 / LMG 7866 / NBRC 102419 / NCTC 12128 / CDC 0568-73).